Consider the following 264-residue polypeptide: tRNA pseudouridine synthase A (264 aa).

Aspartate 51 serves as the catalytic Nucleophile. Tyrosine 109 contributes to the substrate binding site.

This sequence belongs to the tRNA pseudouridine synthase TruA family. As to quaternary structure, homodimer.

The catalysed reaction is uridine(38/39/40) in tRNA = pseudouridine(38/39/40) in tRNA. Functionally, formation of pseudouridine at positions 38, 39 and 40 in the anticodon stem and loop of transfer RNAs. The polypeptide is tRNA pseudouridine synthase A (Vibrio cholerae serotype O1 (strain ATCC 39541 / Classical Ogawa 395 / O395)).